Consider the following 336-residue polypeptide: Glyceraldehyde-3-phosphate dehydrogenase 1 (336 aa).

Residues 12–13, D34, and S120 contribute to the NAD(+) site; that span reads RI. Residues 150 to 152, T181, R198, 211 to 212, and R234 each bind D-glyceraldehyde 3-phosphate; these read SCT and TG. C151 serves as the catalytic Nucleophile. N316 provides a ligand contact to NAD(+).

The protein belongs to the glyceraldehyde-3-phosphate dehydrogenase family. In terms of assembly, homotetramer.

The protein localises to the cytoplasm. It catalyses the reaction D-glyceraldehyde 3-phosphate + phosphate + NAD(+) = (2R)-3-phospho-glyceroyl phosphate + NADH + H(+). The protein operates within carbohydrate degradation; glycolysis; pyruvate from D-glyceraldehyde 3-phosphate: step 1/5. In terms of biological role, catalyzes the oxidative phosphorylation of glyceraldehyde 3-phosphate (G3P) to 1,3-bisphosphoglycerate (BPG) using the cofactor NAD. The first reaction step involves the formation of a hemiacetal intermediate between G3P and a cysteine residue, and this hemiacetal intermediate is then oxidized to a thioester, with concomitant reduction of NAD to NADH. The reduced NADH is then exchanged with the second NAD, and the thioester is attacked by a nucleophilic inorganic phosphate to produce BPG. The polypeptide is Glyceraldehyde-3-phosphate dehydrogenase 1 (gapA1) (Staphylococcus epidermidis (strain ATCC 35984 / DSM 28319 / BCRC 17069 / CCUG 31568 / BM 3577 / RP62A)).